Reading from the N-terminus, the 325-residue chain is Melanocortin receptor 5 (325 aa).

Residues 1–37 (MNSSFHLHFLDLGLNTTDGNLSGLSVQNASSLCEDMG) are Extracellular-facing. N-linked (GlcNAc...) asparagine glycosylation is found at Asn-2, Asn-15, Asn-20, and Asn-28. The helical transmembrane segment at 38–61 (IAVEVFLALGLISLLENILVIGAI) threads the bilayer. Residues 62–73 (VRNRNLHTPMYF) lie on the Cytoplasmic side of the membrane. Residues 74-97 (FVGSLAVADMLVSLSNSWETITIY) form a helical membrane-spanning segment. The Extracellular portion of the chain corresponds to 98–114 (LLTNKHLVMADASVRHL). Residues 115–138 (DNVFDSMICISVVASMCSLLAIAV) traverse the membrane as a helical segment. Topologically, residues 139–155 (DRYVTIFCALRYQRIMT) are cytoplasmic. A helical transmembrane segment spans residues 156–179 (GRRSGAIIGGIWAFCASCGTVFIV). Residues 180-186 (YYESTYV) are Extracellular-facing. The chain crosses the membrane as a helical span at residues 187–211 (VICLIAMFLTMLLLMASLYTHMFLL). Residues 212-239 (ARTHIRRIATLPGHSSVRQRTGVKGAIT) are Cytoplasmic-facing. Residues 240 to 265 (LAMLLGVFIVCWAPFFLHLILMISCP) form a helical membrane-spanning segment. Residues 266–273 (HNLYCSCF) are Extracellular-facing. A helical membrane pass occupies residues 274–297 (MSHFNMYLILIMCNSVIDPLIYAF). Residues 298–325 (RSQEMRKTFKEIVCFQSFRTPCRFPSRY) are Cytoplasmic-facing. Cys-311 carries the S-palmitoyl cysteine lipid modification.

It belongs to the G-protein coupled receptor 1 family.

The protein resides in the cell membrane. Functionally, receptor for MSH (alpha, beta and gamma) and ACTH. The activity of this receptor is mediated by G proteins which activate adenylate cyclase. This receptor is a possible mediator of the immunomodulation properties of melanocortins. This Bos taurus (Bovine) protein is Melanocortin receptor 5 (MC5R).